We begin with the raw amino-acid sequence, 633 residues long: Basic helix-loop-helix ARNT-like protein 1 (633 aa).

The interval 1–65 (MADQRMDISS…GMDTDKDDQH (65 aa)) is disordered. Ser17 carries the post-translational modification Phosphoserine; by GSK3-beta. A compositionally biased stretch (polar residues) spans 24–33 (ISSSLSTSGM). A Nuclear localization signal motif is present at residues 36–41 (NRKRKG). One can recognise a bHLH domain in the interval 79-132 (NAREAHSQIEKRRRDKMNSFIDELASLVPTCNAMSRKLDKLTVLRMAVQHMKTL). Residue Ser85 is modified to Phosphoserine. Position 97 is a phosphoserine; by CK2 (Ser97). Residues 149 to 159 (LSDDELKHLIL) carry the Nuclear export signal 1 motif. Residues 150-222 (SDDELKHLIL…EQLSSSDTAP (73 aa)) form the PAS 1 domain. Lys259 is covalently cross-linked (Glycyl lysine isopeptide (Lys-Gly) (interchain with G-Cter in SUMO2 and SUMO3)). Lys266 participates in a covalent cross-link: Glycyl lysine isopeptide (Lys-Gly) (interchain with G-Cter in SUMO). The PAS 2 domain maps to 333 to 403 (PQPVNGEIRV…ECHRQVLQTR (71 aa)). The Nuclear export signal 2 signature appears at 368 to 376 (LAYLPQELL). The region spanning 408 to 451 (TNCYKFKIKDGSFITLRSRWFSFMNPWTKEVEYIVSTNTVVSTN) is the PAC domain. Disordered stretches follow at residues 472–499 (SVLQ…RAGA) and 518–555 (GSSP…TPDI). The span at 518–528 (GSSPSSCGSSP) shows a compositional bias: low complexity. N6-acetyllysine is present on Lys545.

As to quaternary structure, component of the circadian clock oscillator which includes the CRY1/2 proteins, CLOCK or NPAS2, BMAL1 or BMAL2, CSNK1D and/or CSNK1E, TIMELESS and the PER1/2/3 proteins. Forms a heterodimer with CLOCK. The CLOCK-BMAL1 heterodimer is required for E-box-dependent transactivation, for CLOCK nuclear translocation and degradation, and, for phosphorylation of both CLOCK and BMAL1. Interacts with PER1, PER2, CRY1 and CRY2 and this interaction requires a translocation to the nucleus. Interaction of the CLOCK-BMAL1 heterodimer with PER or CRY inhibits transcription activation. Ubiquitinated, leading to its proteasomal degradation. Deubiquitinated by USP9X. Post-translationally, O-glycosylated; contains O-GlcNAc. O-glycosylation by OGT prevents protein degradation by inhibiting ubiquitination. It also stabilizes the CLOCK-BMAL1 heterodimer thereby increasing CLOCK-BMAL1-mediated transcription of genes in the negative loop of the circadian clock such as PER1/2/3 and CRY1/2. In terms of processing, acetylated on Lys-545 by CLOCK during the repression phase of the circadian cycle. Acetylation facilitates recruitment of CRY1 protein and initiates the repression phase of the circadian cycle. Acetylated at Lys-545 by KAT5 during the activation phase of the cycle, leading to recruitment of the positive transcription elongation factor b (P-TEFb) and BRD4, followed by productive elongation of circadian transcripts. Deacetylated by SIRT1, which may result in decreased protein stability. Phosphorylated upon dimerization with CLOCK. Phosphorylation enhances the transcriptional activity, alters the subcellular localization and decreases the stability of the CLOCK-BMAL1 heterodimer by promoting its degradation. Phosphorylation shows circadian variations in the liver with a peak between CT10 to CT14. Phosphorylation at Ser-97 by CK2 is essential for its nuclear localization, its interaction with CLOCK and controls CLOCK nuclear entry. Dephosphorylation at Ser-85 is important for dimerization with CLOCK and transcriptional activity. Post-translationally, sumoylated on Lys-266 upon dimerization with CLOCK. Predominantly conjugated to poly-SUMO2/3 rather than SUMO1 and the level of these conjugates undergo rhythmic variation, peaking at CT9-CT12. Sumoylation localizes it exclusively to the PML body and promotes its ubiquitination in the PML body, ubiquitin-dependent proteasomal degradation and the transcriptional activity of the CLOCK-BMAL1 heterodimer. In terms of processing, undergoes lysosome-mediated degradation in a time-dependent manner in the liver.

Its subcellular location is the nucleus. It is found in the cytoplasm. The protein localises to the PML body. Its function is as follows. Transcriptional activator which forms a core component of the circadian clock. The circadian clock, an internal time-keeping system, regulates various physiological processes through the generation of approximately 24 hour circadian rhythms in gene expression, which are translated into rhythms in metabolism and behavior. It is derived from the Latin roots 'circa' (about) and 'diem' (day) and acts as an important regulator of a wide array of physiological functions including metabolism, sleep, body temperature, blood pressure, endocrine, immune, cardiovascular, and renal function. Consists of two major components: the central clock, residing in the suprachiasmatic nucleus (SCN) of the brain, and the peripheral clocks that are present in nearly every tissue and organ system. Both the central and peripheral clocks can be reset by environmental cues, also known as Zeitgebers (German for 'timegivers'). The predominant Zeitgeber for the central clock is light, which is sensed by retina and signals directly to the SCN. The central clock entrains the peripheral clocks through neuronal and hormonal signals, body temperature and feeding-related cues, aligning all clocks with the external light/dark cycle. Circadian rhythms allow an organism to achieve temporal homeostasis with its environment at the molecular level by regulating gene expression to create a peak of protein expression once every 24 hours to control when a particular physiological process is most active with respect to the solar day. Transcription and translation of core clock components (CLOCK, NPAS2, BMAL1, BMAL2, PER1, PER2, PER3, CRY1 and CRY2) plays a critical role in rhythm generation, whereas delays imposed by post-translational modifications (PTMs) are important for determining the period (tau) of the rhythms (tau refers to the period of a rhythm and is the length, in time, of one complete cycle). A diurnal rhythm is synchronized with the day/night cycle, while the ultradian and infradian rhythms have a period shorter and longer than 24 hours, respectively. Disruptions in the circadian rhythms contribute to the pathology of cardiovascular diseases, cancer, metabolic syndromes and aging. A transcription/translation feedback loop (TTFL) forms the core of the molecular circadian clock mechanism. Transcription factors, CLOCK or NPAS2 and BMAL1 or BMAL2, form the positive limb of the feedback loop, act in the form of a heterodimer and activate the transcription of core clock genes and clock-controlled genes (involved in key metabolic processes), harboring E-box elements (5'-CACGTG-3') within their promoters. The core clock genes: PER1/2/3 and CRY1/2 which are transcriptional repressors form the negative limb of the feedback loop and interact with the CLOCK|NPAS2-BMAL1|BMAL2 heterodimer inhibiting its activity and thereby negatively regulating their own expression. This heterodimer also activates nuclear receptors NR1D1/2 and RORA/B/G, which form a second feedback loop and which activate and repress BMAL1 transcription, respectively. The preferred binding motif for the CLOCK-BMAL1 heterodimer is 5'-CACGTGA-3', which contains a flanking adenine nucleotide at the 3-prime end of the canonical 6-nucleotide E-box sequence. CLOCK specifically binds to the half-site 5'-CAC-3', while BMAL1 binds to the half-site 5'-GTGA-3'. Essential for the rhythmic interaction of CLOCK with ASS1 and plays a critical role in positively regulating CLOCK-mediated acetylation of ASS1. Plays a role in protecting against lethal sepsis by limiting the expression of immune checkpoint protein CD274 in macrophages in a PKM2-dependent manner. This is Basic helix-loop-helix ARNT-like protein 1 (BMAL1) from Tyto alba (Barn owl).